Reading from the N-terminus, the 149-residue chain is Protegrin-4 (149 aa).

The first 29 residues, 1–29, serve as a signal peptide directing secretion; that stretch reads METQRASLCLGRWSLWLLLLALVVPSASA. Positions 30-130 are excised as a propeptide; sequence QALSYREAVL…DITCNEVQGV (101 aa). The disordered stretch occupies residues 61–80; that stretch reads DQPPKADEDPGTPKPVSFTV. Cystine bridges form between cysteine 85–cysteine 96, cysteine 107–cysteine 124, cysteine 136–cysteine 145, and cysteine 138–cysteine 143. At arginine 148 the chain carries Arginine amide.

Belongs to the cathelicidin family.

It localises to the secreted. Microbicidal activity. In Sus scrofa (Pig), this protein is Protegrin-4 (NPG4).